Consider the following 350-residue polypeptide: NADH-quinone oxidoreductase subunit H (350 aa).

8 helical membrane-spanning segments follow: residues 31 to 51 (LMLL…LFLI), 102 to 122 (LLAP…IPFG), 132 to 152 (LGVL…WMAG), 171 to 191 (MLSY…MAGS), 205 to 225 (WFIF…NAEF), 263 to 283 (FMIG…APFG), 286 to 306 (FIPS…LYMW), and 322 to 342 (FAWK…GFGL).

The protein belongs to the complex I subunit 1 family. NDH-1 is composed of 14 different subunits. Subunits NuoA, H, J, K, L, M, N constitute the membrane sector of the complex.

The protein localises to the cell membrane. It catalyses the reaction a quinone + NADH + 5 H(+)(in) = a quinol + NAD(+) + 4 H(+)(out). Functionally, NDH-1 shuttles electrons from NADH, via FMN and iron-sulfur (Fe-S) centers, to quinones in the respiratory chain. The immediate electron acceptor for the enzyme in this species is believed to be ubiquinone. Couples the redox reaction to proton translocation (for every two electrons transferred, four hydrogen ions are translocated across the cytoplasmic membrane), and thus conserves the redox energy in a proton gradient. This subunit may bind ubiquinone. The protein is NADH-quinone oxidoreductase subunit H of Carboxydothermus hydrogenoformans (strain ATCC BAA-161 / DSM 6008 / Z-2901).